We begin with the raw amino-acid sequence, 315 residues long: L-lactate dehydrogenase (315 aa).

Residues Val17, Asp38, Lys43, Tyr69, and 83 to 84 (GA) contribute to the NAD(+) site. Residues Gln86, Arg92, and 124–127 (NPVD) contribute to the substrate site. Residues 122-124 (ATN) and Ser147 each bind NAD(+). Residue 152–155 (DTAR) coordinates substrate. Beta-D-fructose 1,6-bisphosphate contacts are provided by Arg157 and His172. The active-site Proton acceptor is the His179. Tyr224 carries the phosphotyrosine modification. Thr233 lines the substrate pocket.

It belongs to the LDH/MDH superfamily. LDH family. As to quaternary structure, homotetramer.

The protein resides in the cytoplasm. It catalyses the reaction (S)-lactate + NAD(+) = pyruvate + NADH + H(+). It functions in the pathway fermentation; pyruvate fermentation to lactate; (S)-lactate from pyruvate: step 1/1. Allosterically activated by fructose 1,6-bisphosphate (FBP). Catalyzes the conversion of lactate to pyruvate. In Bacillus pumilus (strain SAFR-032), this protein is L-lactate dehydrogenase.